We begin with the raw amino-acid sequence, 231 residues long: MEGGRGVTRVLLVDDSPVDRRVVQLLLSSSACAGSFHVIAVDSAKKAMEFLGLKEEGKEQAIDMVLTDYCMPEMTGYELLKAIKALSPLKPIPVIVMSSENEPQRISRCMNAGAEDFIVKPLQSKDVQRLRNCSPANTQCCDAGSDGKPPLLLLPSDHVVVDATAASPPPPPSRRRAHFAGVAMVLHSSSVELSHYFPFLFKFILLVYAILCLGELLHRWSNGCFLNLWCA.

A Response regulatory domain is found at 9-135 (RVLLVDDSPV…DVQRLRNCSP (127 aa)). Aspartate 68 carries the post-translational modification 4-aspartylphosphate.

The protein belongs to the ARR family. Type-A subfamily. In terms of processing, two-component system major event consists of a His-to-Asp phosphorelay between a sensor histidine kinase (HK) and a response regulator (RR). In plants, the His-to-Asp phosphorelay involves an additional intermediate named Histidine-containing phosphotransfer protein (HPt). This multistep phosphorelay consists of a His-Asp-His-Asp sequential transfer of a phosphate group between first a His and an Asp of the HK protein, followed by the transfer to a conserved His of the HPt protein and finally the transfer to an Asp in the receiver domain of the RR protein. In terms of tissue distribution, expressed in roots, leaf blades, leaf sheaths, shoot apex, flowers and panicles.

In terms of biological role, functions as a response regulator involved in His-to-Asp phosphorelay signal transduction system. Phosphorylation of the Asp residue in the receiver domain activates the ability of the protein to promote the transcription of target genes. Type-A response regulators seem to act as negative regulators of the cytokinin signaling. Involved in adventitious (crown) root initiation under the regulation of CRL5. The protein is Two-component response regulator ORR1 of Oryza sativa subsp. japonica (Rice).